A 54-amino-acid polypeptide reads, in one-letter code: UPF0391 membrane protein Oant_1245 (54 aa).

The next 2 helical transmembrane spans lie at 5–25 (ALVFLVVALVAGALGFGGIAG) and 29–48 (GIAQILFFVFLALLVISLIA).

It belongs to the UPF0391 family.

Its subcellular location is the cell membrane. This Brucella anthropi (strain ATCC 49188 / DSM 6882 / CCUG 24695 / JCM 21032 / LMG 3331 / NBRC 15819 / NCTC 12168 / Alc 37) (Ochrobactrum anthropi) protein is UPF0391 membrane protein Oant_1245.